The following is an 815-amino-acid chain: MPKHLLIVESPAKAKTINKYLGKDFTVLASYGHVRDLVPKEGAVDPENGFAMRYDLIDKNEKHVEAITKAAKTADSIYLATDPDREGEAISWHISEILKERGLLKDKPMQRIVFTEITPRAIKEAIQKPRMIASDLVDAQQARRALDYLVGFNLSPVLWRKVQRGLSAGRVQSPALRMIVEREEEIEAFITREYWSIHAECAHPAQHFSAKLIKLDGQKFEQFTITDSDTAAAAQRRIQQVAQGRLHITDVTNKERKRRPAPPFITSTLQQEASRKLGFTTRKTMQIAQKLYEGIALGEEGSVGLITYMRTDSVNLSLDALSEIRDIIARDYGTNALPDKPNVYTTKSKNAQEAHEAVRPTSALRTPTQVAPYLSNEEHRLYELVWKRAVASQMIPAILNTTSVDLAAGNEHVFRATGTTVVVQGFLAVYEEGKDNKNAEDDDEGRKLPVMKTGENVPLERILTEQHFTQPPPRYTEAALVKALEEYGIGRPSTYASIIQTLLFRKYVDMEGRSFRPTDIGRAVSKFLASHFTRYVDYDFTAHLEDELDAISRGEEEWIPLMKKFWVPFKELVEDKKDSLDKTDAGSVRLLGIDPTSGKEVSGRIGRFGPMVQIGTVDDEEKPRFASLRPNQSIYSISLEEAIELFKMPRVLGEDQSQQVSVGIGRFGPFAKRGSTYVSLKSEDDPYTIDLARATFLINEKEEIARNRIIKNFENSQIQVLNGRFGPYISDGKLNGKIPKDREPASLTLEEAQQLLIDTGKPARKNFSTKKTATKNETRKQTTKKRTTDAKATKKVSDKPVKKQIKKRIAPNITE.

The Toprim domain maps to 3–119 (KHLLIVESPA…QRIVFTEITP (117 aa)). Mg(2+) contacts are provided by glutamate 9 and aspartate 82. A Topo IA-type catalytic domain is found at 133 to 573 (ASDLVDAQQA…KFWVPFKELV (441 aa)). The segment at 167–172 (SAGRVQ) is interaction with DNA. Catalysis depends on tyrosine 308, which acts as the O-(5'-phospho-DNA)-tyrosine intermediate. The tract at residues 760-815 (GKPARKNFSTKKTATKNETRKQTTKKRTTDAKATKKVSDKPVKKQIKKRIAPNITE) is disordered. A compositionally biased stretch (basic and acidic residues) spans 774–801 (TKNETRKQTTKKRTTDAKATKKVSDKPV).

This sequence belongs to the type IA topoisomerase family. Monomer. Mg(2+) serves as cofactor.

The enzyme catalyses ATP-independent breakage of single-stranded DNA, followed by passage and rejoining.. Its function is as follows. Releases the supercoiling and torsional tension of DNA, which is introduced during the DNA replication and transcription, by transiently cleaving and rejoining one strand of the DNA duplex. Introduces a single-strand break via transesterification at a target site in duplex DNA. The scissile phosphodiester is attacked by the catalytic tyrosine of the enzyme, resulting in the formation of a DNA-(5'-phosphotyrosyl)-enzyme intermediate and the expulsion of a 3'-OH DNA strand. The free DNA strand then undergoes passage around the unbroken strand, thus removing DNA supercoils. Finally, in the religation step, the DNA 3'-OH attacks the covalent intermediate to expel the active-site tyrosine and restore the DNA phosphodiester backbone. In Xylella fastidiosa (strain 9a5c), this protein is DNA topoisomerase 1.